A 488-amino-acid polypeptide reads, in one-letter code: Protein nucleotidyltransferase YdiU (488 aa).

8 residues coordinate ATP: Gly-91, Gly-93, Arg-94, Lys-114, Asp-126, Gly-127, Arg-177, and Arg-184. The active-site Proton acceptor is the Asp-253. Mg(2+) contacts are provided by Asn-254 and Asp-263. Asp-263 is an ATP binding site.

Belongs to the SELO family. The cofactor is Mg(2+). It depends on Mn(2+) as a cofactor.

The catalysed reaction is L-seryl-[protein] + ATP = 3-O-(5'-adenylyl)-L-seryl-[protein] + diphosphate. It carries out the reaction L-threonyl-[protein] + ATP = 3-O-(5'-adenylyl)-L-threonyl-[protein] + diphosphate. It catalyses the reaction L-tyrosyl-[protein] + ATP = O-(5'-adenylyl)-L-tyrosyl-[protein] + diphosphate. The enzyme catalyses L-histidyl-[protein] + UTP = N(tele)-(5'-uridylyl)-L-histidyl-[protein] + diphosphate. The catalysed reaction is L-seryl-[protein] + UTP = O-(5'-uridylyl)-L-seryl-[protein] + diphosphate. It carries out the reaction L-tyrosyl-[protein] + UTP = O-(5'-uridylyl)-L-tyrosyl-[protein] + diphosphate. In terms of biological role, nucleotidyltransferase involved in the post-translational modification of proteins. It can catalyze the addition of adenosine monophosphate (AMP) or uridine monophosphate (UMP) to a protein, resulting in modifications known as AMPylation and UMPylation. In Bacillus cereus (strain ATCC 10987 / NRS 248), this protein is Protein nucleotidyltransferase YdiU.